A 338-amino-acid chain; its full sequence is Nuclear hormone receptor family member nhr-108 (338 aa).

The nuclear receptor DNA-binding region spans 7 to 82; it reads NQPCMVCGEI…IGMLEKVVAS (76 aa). The segment at 10–30 adopts an NR C4-type zinc-finger fold; the sequence is CMVCGEISYSIRFGAVSCRAC. The NR C4-type; degenerate zinc-finger motif lies at 46–65; that stretch reads KRCNGACDLGKYHRKTCQSC. The NR LBD domain occupies 92-338; it reads NNQTILSGLE…QCPLYEATNE (247 aa).

The protein belongs to the nuclear hormone receptor family.

It is found in the nucleus. In terms of biological role, orphan nuclear receptor. This is Nuclear hormone receptor family member nhr-108 (nhr-108) from Caenorhabditis elegans.